A 213-amino-acid polypeptide reads, in one-letter code: Vacuolar protein sorting-associated protein 32 homolog 1 (213 aa).

Coiled coils occupy residues 11-42 and 118-176; these read KQET…KKAT and TNID…QLLQ. The segment at 180–213 is disordered; sequence IHVPQGNKPARAPAQKQPTAEEDELAALQAEMAL.

It belongs to the SNF7 family. As to quaternary structure, component of the endosomal sorting required for transport complex III (ESCRT-III), composed at least of VPS2, VPS20, VPS24 and VPS32. Interacts with SKD1. Interacts with BRO1/ALIX.

Its subcellular location is the endosome. Functionally, component of the ESCRT-III complex, which is required for multivesicular bodies (MVBs) formation and sorting of endosomal cargo proteins into MVBs. The ESCRT-III complex is probably involved in the concentration of MVB cargo. The chain is Vacuolar protein sorting-associated protein 32 homolog 1 (VPS32.1) from Arabidopsis thaliana (Mouse-ear cress).